Reading from the N-terminus, the 49-residue chain is Small integral membrane protein 27 (49 aa).

A helical transmembrane segment spans residues 11 to 31 (WTYSLLLLAIVLLSWGFVIYA).

The protein localises to the membrane. The protein is Small integral membrane protein 27 of Mus musculus (Mouse).